Reading from the N-terminus, the 65-residue chain is Large ribosomal subunit protein uL30 (65 aa).

Belongs to the universal ribosomal protein uL30 family. In terms of assembly, part of the 50S ribosomal subunit.

The polypeptide is Large ribosomal subunit protein uL30 (Methylobacillus flagellatus (strain ATCC 51484 / DSM 6875 / VKM B-1610 / KT)).